Here is a 718-residue protein sequence, read N- to C-terminus: Calpastatin (718 aa).

Disordered regions lie at residues 1-189 (MNPA…MSST) and 210-238 (EKKT…LSSD). Positions 20–29 (PHSKKRHRRQ) are enriched in basic residues. Composition is skewed to basic and acidic residues over residues 30 to 61 (DAKT…EHTK) and 68 to 104 (HASD…KPQD). Residue Lys32 forms a Glycyl lysine isopeptide (Lys-Gly) (interchain with G-Cter in SUMO2) linkage. The residue at position 49 (Lys49) is an N6-acetyllysine. Ser86 is modified (phosphoserine). Over residues 114-124 (AAGTTAAPGKA) the composition is skewed to low complexity. 3 positions are modified to phosphoserine: Ser133, Ser222, and Ser243. Residues 170–222 (TQEDSTAYTGPEISDPMSSTYIEELGKREVTIPPKYRELLEKKTGVAGPPPDS) form an Inhibitory domain 1 repeat. Disordered regions lie at residues 266–291 (ESAK…AMSD) and 320–509 (EAKR…QLPA). At Ser290 the chain carries Blocked amino end (Ser); in form erythrocyte. The Inhibitory domain 2 repeat unit spans residues 307-359 (EPELDLSSIKEVAEAKRKEEKVEKCGEDDETVPAEYRLKPATDKDGKPLLPEP). Composition is skewed to basic and acidic residues over residues 320–331 (EAKRKEEKVEKC), 342–377 (YRLK…ELSK), and 384–399 (SNEK…EESK). Phosphoserine occurs at positions 367, 369, and 376. Residues 400–411 (AAVPAPVAEAVP) are compositionally biased toward low complexity. A Phosphoserine modification is found at Ser444. The segment covering 446 to 496 (GRKEADPEEGKPVADKIKEKSKEEEREKLGEKEETIPPDYRLEEAKDKDGK) has biased composition (basic and acidic residues). One copy of the Inhibitory domain 3 repeat lies at 450 to 503 (ADPEEGKPVADKIKEKSKEEEREKLGEKEETIPPDYRLEEAKDKDGKPLLPSEP). A phosphoserine mark is found at Ser520, Ser531, Ser579, and Ser581. Residues 543 to 718 (VSEVVSQSPA…KPKANEKNAS (176 aa)) are disordered. The span at 566-579 (PSNKELDDALDKLS) shows a compositional bias: basic and acidic residues. Residues 587 to 640 (PDPDENKPMEDKVKERAKKEHKDKLGERDDTIPPEYRHLLDQGEQDKPEKPPTK) form an Inhibitory domain 4 repeat. Composition is skewed to basic and acidic residues over residues 587–650 (PDPD…KPAG) and 706–718 (ETSK…KNAS).

The protein belongs to the protease inhibitor I27 (calpastatin) family.

In terms of biological role, specific inhibition of calpain (calcium-dependent cysteine protease). Plays a key role in postmortem tenderization of meat and have been proposed to be involved in muscle protein degradation in living tissue. In Oryctolagus cuniculus (Rabbit), this protein is Calpastatin (CAST).